Here is a 169-residue protein sequence, read N- to C-terminus: Disulfide bond formation protein B (169 aa).

Residues 1–8 (MRLSVRWV) lie on the Cytoplasmic side of the membrane. The helical transmembrane segment at 9–25 (FFLGFFLCALMLAIAGY) threads the bilayer. Residues 26–43 (FQFVENLEPCPLCILSRV) lie on the Periplasmic side of the membrane. Cysteines 35 and 38 form a disulfide. The chain crosses the membrane as a helical span at residues 44-60 (AVLAIGGVFLVAALHNP). Topologically, residues 61-67 (KSWGIKV) are cytoplasmic. Residues 68–84 (YALLGFVVTLIGIGITG) traverse the membrane as a helical segment. The Periplasmic segment spans residues 85–141 (RHVWLQSLPADQVPACGPGLNFMLDNFPLTETLELVFRGSGECAEVQWSFLGLTIPG). An intrachain disulfide couples Cys100 to Cys127. A helical transmembrane segment spans residues 142–160 (WTLVAFLFLGVISLWQMGR). At 161–169 (TGGGAGKLT) the chain is on the cytoplasmic side.

Belongs to the DsbB family.

The protein localises to the cell inner membrane. Its function is as follows. Required for disulfide bond formation in some periplasmic proteins. Acts by oxidizing the DsbA protein. The protein is Disulfide bond formation protein B of Nitrosococcus oceani (strain ATCC 19707 / BCRC 17464 / JCM 30415 / NCIMB 11848 / C-107).